The following is a 264-amino-acid chain: Thymidylate synthase (264 aa).

Arg21 provides a ligand contact to dUMP. (6R)-5,10-methylene-5,6,7,8-tetrahydrofolate is bound at residue His51. A dUMP-binding site is contributed by 126 to 127 (RR). Catalysis depends on Cys146, which acts as the Nucleophile. DUMP-binding positions include 166-169 (RSAD), Asn177, and 207-209 (HLY). (6R)-5,10-methylene-5,6,7,8-tetrahydrofolate is bound at residue Asp169. Ala263 is a binding site for (6R)-5,10-methylene-5,6,7,8-tetrahydrofolate.

It belongs to the thymidylate synthase family. Bacterial-type ThyA subfamily. As to quaternary structure, homodimer.

Its subcellular location is the cytoplasm. The enzyme catalyses dUMP + (6R)-5,10-methylene-5,6,7,8-tetrahydrofolate = 7,8-dihydrofolate + dTMP. Its pathway is pyrimidine metabolism; dTTP biosynthesis. Functionally, catalyzes the reductive methylation of 2'-deoxyuridine-5'-monophosphate (dUMP) to 2'-deoxythymidine-5'-monophosphate (dTMP) while utilizing 5,10-methylenetetrahydrofolate (mTHF) as the methyl donor and reductant in the reaction, yielding dihydrofolate (DHF) as a by-product. This enzymatic reaction provides an intracellular de novo source of dTMP, an essential precursor for DNA biosynthesis. This is Thymidylate synthase from Bdellovibrio bacteriovorus (strain ATCC 15356 / DSM 50701 / NCIMB 9529 / HD100).